We begin with the raw amino-acid sequence, 291 residues long: MAAEEHALTSPEYIKHHLTNMTYGKMPDGTWKLAETAEEAHSMGFTAIHLDSMGWSIGLGVIFCLLFWIVARAANAGVPTKFQSAIEMIIEFVDSSVRDTFHGKSRLIAPLALTIFVWIFLMNLMDLIPVDWIPQVAAFVGANAFGMDPHHVYFKIVPSTDPNITLGMSLSVFVLILFYSIREKGVGGFVGELALNPFNPSNPVAKALLIPVNLILELVTFLARPISLALRLFGNMYAGELIFILIALLPFWIQWALSVPWAIFHILVITLQAFIFMMLTIVYLSMASEKH.

6 helical membrane passes run 50 to 70 (LDSM…FWIV), 108 to 128 (IAPL…MDLI), 161 to 181 (DPNI…FYSI), 203 to 223 (PVAK…TFLA), 241 to 261 (LIFI…SVPW), and 262 to 282 (AIFH…LTIV).

This sequence belongs to the ATPase A chain family. F-type ATPases have 2 components, CF(1) - the catalytic core - and CF(0) - the membrane proton channel. CF(1) has five subunits: alpha(3), beta(3), gamma(1), delta(1), epsilon(1). CF(0) has three main subunits: a(1), b(2) and c(9-12). The alpha and beta chains form an alternating ring which encloses part of the gamma chain. CF(1) is attached to CF(0) by a central stalk formed by the gamma and epsilon chains, while a peripheral stalk is formed by the delta and b chains.

It is found in the cell inner membrane. Key component of the proton channel; it plays a direct role in the translocation of protons across the membrane. This Acinetobacter baumannii (strain SDF) protein is ATP synthase subunit a.